Reading from the N-terminus, the 282-residue chain is Keratin-associated protein 10-1 (282 aa).

Tandem repeats lie at residues 26–30 (CCEPH), 31–35 (CCALS), 36–40 (CCAPA), 57–61 (CCQAA), 79–83 (CCQQS), 89–93 (CCTSS), 99–103 (CCVPV), 104–108 (CCKPV), 109–113 (CCLPT), 121–125 (CCQQS), 131–135 (CCASS), 141–145 (CCVPV), 146–150 (CCKPV), 163–167 (CCQQS), 173–177 (CCTSS), 183–187 (CCVPV), 193–197 (CCKPI), 198–202 (CCVPV), 210–214 (CCQQS), 220–224 (CCTTS), 225–229 (CCRPS), 244–248 (CCMPV), 251–255 (CCAPA), and 262–266 (CCRPA). The tract at residues 26 to 266 (CCEPHCCALS…SCQASCCRPA (241 aa)) is 24 X 5 AA repeats of C-C-X(3).

Belongs to the KRTAP type 10 family. In terms of assembly, interacts with hair keratins. In terms of tissue distribution, restricted to a narrow region of the hair fiber cuticle, lying approximately 20 cell layers above the apex of the dermal papilla of the hair root; not detected in any other tissues.

Functionally, in the hair cortex, hair keratin intermediate filaments are embedded in an interfilamentous matrix, consisting of hair keratin-associated proteins (KRTAP), which are essential for the formation of a rigid and resistant hair shaft through their extensive disulfide bond cross-linking with abundant cysteine residues of hair keratins. The matrix proteins include the high-sulfur and high-glycine-tyrosine keratins. In Homo sapiens (Human), this protein is Keratin-associated protein 10-1 (KRTAP10-1).